Reading from the N-terminus, the 492-residue chain is Glutamyl-tRNA(Gln) amidotransferase subunit A (492 aa).

Active-site charge relay system residues include K78 and S158. The active-site Acyl-ester intermediate is S182.

This sequence belongs to the amidase family. GatA subfamily. In terms of assembly, heterotrimer of A, B and C subunits.

The enzyme catalyses L-glutamyl-tRNA(Gln) + L-glutamine + ATP + H2O = L-glutaminyl-tRNA(Gln) + L-glutamate + ADP + phosphate + H(+). In terms of biological role, allows the formation of correctly charged Gln-tRNA(Gln) through the transamidation of misacylated Glu-tRNA(Gln) in organisms which lack glutaminyl-tRNA synthetase. The reaction takes place in the presence of glutamine and ATP through an activated gamma-phospho-Glu-tRNA(Gln). This chain is Glutamyl-tRNA(Gln) amidotransferase subunit A, found in Zymomonas mobilis subsp. mobilis (strain ATCC 31821 / ZM4 / CP4).